We begin with the raw amino-acid sequence, 270 residues long: Putative pyruvate, phosphate dikinase regulatory protein 1 (270 aa).

Position 151–158 (151–158) interacts with ADP; that stretch reads GVSRTSKT.

Belongs to the pyruvate, phosphate/water dikinase regulatory protein family. PDRP subfamily.

It carries out the reaction N(tele)-phospho-L-histidyl/L-threonyl-[pyruvate, phosphate dikinase] + ADP = N(tele)-phospho-L-histidyl/O-phospho-L-threonyl-[pyruvate, phosphate dikinase] + AMP + H(+). It catalyses the reaction N(tele)-phospho-L-histidyl/O-phospho-L-threonyl-[pyruvate, phosphate dikinase] + phosphate + H(+) = N(tele)-phospho-L-histidyl/L-threonyl-[pyruvate, phosphate dikinase] + diphosphate. Its function is as follows. Bifunctional serine/threonine kinase and phosphorylase involved in the regulation of the pyruvate, phosphate dikinase (PPDK) by catalyzing its phosphorylation/dephosphorylation. The polypeptide is Putative pyruvate, phosphate dikinase regulatory protein 1 (Enterococcus faecalis (strain ATCC 700802 / V583)).